The chain runs to 110 residues: uncharacterized protein (110 aa).

This is an uncharacterized protein from Acidianus convivator (ABV).